The chain runs to 417 residues: Gamma-glutamyl phosphate reductase (417 aa).

It belongs to the gamma-glutamyl phosphate reductase family.

The protein localises to the cytoplasm. The catalysed reaction is L-glutamate 5-semialdehyde + phosphate + NADP(+) = L-glutamyl 5-phosphate + NADPH + H(+). It participates in amino-acid biosynthesis; L-proline biosynthesis; L-glutamate 5-semialdehyde from L-glutamate: step 2/2. In terms of biological role, catalyzes the NADPH-dependent reduction of L-glutamate 5-phosphate into L-glutamate 5-semialdehyde and phosphate. The product spontaneously undergoes cyclization to form 1-pyrroline-5-carboxylate. In Escherichia coli O7:K1 (strain IAI39 / ExPEC), this protein is Gamma-glutamyl phosphate reductase.